We begin with the raw amino-acid sequence, 140 residues long: Large ribosomal subunit protein uL16c (140 aa).

Belongs to the universal ribosomal protein uL16 family. As to quaternary structure, part of the 50S ribosomal subunit.

Its subcellular location is the plastid. It localises to the chloroplast. The chain is Large ribosomal subunit protein uL16c from Cyanidium caldarium (Red alga).